A 97-amino-acid polypeptide reads, in one-letter code: uncharacterized protein (97 aa).

The segment covering 1–24 (MTQKNGADRPDDYKRFSSLDKEYD) has biased composition (basic and acidic residues). Positions 1–97 (MTQKNGADRP…FEGTIDQNLD (97 aa)) are disordered. Low complexity predominate over residues 31 to 43 (SNTETESVNTETQ). The span at 44 to 53 (THNKENKNDT) shows a compositional bias: basic and acidic residues.

This is an uncharacterized protein from Bacillus subtilis (strain 168).